We begin with the raw amino-acid sequence, 126 residues long: Large ribosomal subunit protein bL17 (126 aa).

This sequence belongs to the bacterial ribosomal protein bL17 family. In terms of assembly, part of the 50S ribosomal subunit. Contacts protein L32.

The polypeptide is Large ribosomal subunit protein bL17 (Lawsonia intracellularis (strain PHE/MN1-00)).